Reading from the N-terminus, the 261-residue chain is Putative hydro-lyase SSP0308 (261 aa).

Belongs to the D-glutamate cyclase family.

The polypeptide is Putative hydro-lyase SSP0308 (Staphylococcus saprophyticus subsp. saprophyticus (strain ATCC 15305 / DSM 20229 / NCIMB 8711 / NCTC 7292 / S-41)).